Here is a 214-residue protein sequence, read N- to C-terminus: Homologous-pairing protein 2 homolog (214 aa).

Positions 79–147 form a coiled coil; it reads SDSELKDLDA…EHKLTNIKSA (69 aa). Positions 115 to 179 are DNA-binding; sequence TSSLTTEEML…WKKRKRMATD (65 aa).

Belongs to the HOP2 family.

The protein resides in the nucleus. Its function is as follows. Plays an important role in meiotic recombination. Stimulates DMC1-mediated strand exchange required for pairing of homologous chromosomes during meiosis. This Xenopus laevis (African clawed frog) protein is Homologous-pairing protein 2 homolog (psmc3ip).